We begin with the raw amino-acid sequence, 201 residues long: Large ribosomal subunit protein bL12m (201 aa).

The N-terminal 38 residues, M1 to L38, are a transit peptide targeting the mitochondrion. Disordered stretches follow at residues Q37–E60 and V109–R130. K128, K141, K145, and K147 each carry N6-acetyllysine. At K153 the chain carries N6-acetyllysine; alternate. K153 is subject to N6-succinyllysine; alternate. K153 participates in a covalent cross-link: Glycyl lysine isopeptide (Lys-Gly) (interchain with G-Cter in ubiquitin). At K165 the chain carries N6-succinyllysine. An N6-acetyllysine mark is found at K166 and K176. K181 carries the post-translational modification N6-acetyllysine; alternate. K181 is modified (N6-succinyllysine; alternate). K188 carries the N6-acetyllysine modification.

Belongs to the bacterial ribosomal protein bL12 family. As to quaternary structure, component of the mitochondrial ribosome large subunit (39S) which comprises a 16S rRNA and about 50 distinct proteins. Interacts with NOA1. Post-translationally, two mature forms are produced by differential two-step proteolytic cleavage. Cleaved by the mitochondrial processing protease to produce the long mature form and subsequently by the mitochondrial intermediate protease to produce the short mature form. In terms of processing, in the presence of CUL3, undergoes 'Lys-63'-linked ubiquitination at Lys-153 which results in proteasomal degradation.

It is found in the mitochondrion matrix. Its function is as follows. As a component of the mitochondrial large ribosomal subunit, plays a role in mitochondrial translation. When present in mitochondria as a free protein not associated with the ribosome, associates with mitochondrial RNA polymerase POLRMT to activate transcription. Required for POLRMT stability. This is Large ribosomal subunit protein bL12m (Mrpl12) from Mus musculus (Mouse).